We begin with the raw amino-acid sequence, 311 residues long: Malate dehydrogenase (311 aa).

NAD(+) is bound by residues 7–13 (GAAGGIG) and D34. Positions 81 and 87 each coordinate substrate. NAD(+) contacts are provided by residues N94 and 117 to 119 (ITN). The substrate site is built by N119 and R153. H177 acts as the Proton acceptor in catalysis. NAD(+) is bound at residue M227.

Belongs to the LDH/MDH superfamily. MDH type 1 family. As to quaternary structure, homodimer.

The enzyme catalyses (S)-malate + NAD(+) = oxaloacetate + NADH + H(+). Catalyzes the reversible oxidation of malate to oxaloacetate. This is Malate dehydrogenase from Aeromonas hydrophila subsp. hydrophila (strain ATCC 7966 / DSM 30187 / BCRC 13018 / CCUG 14551 / JCM 1027 / KCTC 2358 / NCIMB 9240 / NCTC 8049).